We begin with the raw amino-acid sequence, 47 residues long: Photosystem II reaction center protein K (47 aa).

Residues 1–10 (MAAFSLDLLA) constitute a propeptide that is removed on maturation. The chain crosses the membrane as a helical span at residues 19–39 (FGPLIDILPIIPVFFLLLAFV).

This sequence belongs to the PsbK family. As to quaternary structure, PSII is composed of 1 copy each of membrane proteins PsbA, PsbB, PsbC, PsbD, PsbE, PsbF, PsbH, PsbI, PsbJ, PsbK, PsbL, PsbM, PsbT, PsbX, PsbY, PsbZ, Psb30/Ycf12, peripheral proteins PsbO, CyanoQ (PsbQ), PsbU, PsbV and a large number of cofactors. It forms dimeric complexes.

It is found in the cellular thylakoid membrane. Its function is as follows. One of the components of the core complex of photosystem II (PSII). PSII is a light-driven water:plastoquinone oxidoreductase that uses light energy to abstract electrons from H(2)O, generating O(2) and a proton gradient subsequently used for ATP formation. It consists of a core antenna complex that captures photons, and an electron transfer chain that converts photonic excitation into a charge separation. This is Photosystem II reaction center protein K from Synechococcus sp. (strain WH7803).